Reading from the N-terminus, the 204-residue chain is N-(5'-phosphoribosyl)anthranilate isomerase (204 aa).

This sequence belongs to the TrpF family.

The catalysed reaction is N-(5-phospho-beta-D-ribosyl)anthranilate = 1-(2-carboxyphenylamino)-1-deoxy-D-ribulose 5-phosphate. Its pathway is amino-acid biosynthesis; L-tryptophan biosynthesis; L-tryptophan from chorismate: step 3/5. The chain is N-(5'-phosphoribosyl)anthranilate isomerase from Bacillus thuringiensis (strain Al Hakam).